We begin with the raw amino-acid sequence, 232 residues long: Octanoyltransferase (232 aa).

The region spanning 44–219 (EHTGDELWVV…QLARQFGLVL (176 aa)) is the BPL/LPL catalytic domain. Residues 83 to 90 (RGGQVTYH), 150 to 152 (ALG), and 163 to 165 (GLS) contribute to the substrate site. The Acyl-thioester intermediate role is filled by cysteine 181.

This sequence belongs to the LipB family.

The protein resides in the cytoplasm. The enzyme catalyses octanoyl-[ACP] + L-lysyl-[protein] = N(6)-octanoyl-L-lysyl-[protein] + holo-[ACP] + H(+). It functions in the pathway protein modification; protein lipoylation via endogenous pathway; protein N(6)-(lipoyl)lysine from octanoyl-[acyl-carrier-protein]: step 1/2. Catalyzes the transfer of endogenously produced octanoic acid from octanoyl-acyl-carrier-protein onto the lipoyl domains of lipoate-dependent enzymes. Lipoyl-ACP can also act as a substrate although octanoyl-ACP is likely to be the physiological substrate. In Xanthomonas campestris pv. campestris (strain 8004), this protein is Octanoyltransferase.